Consider the following 386-residue polypeptide: Patatin-10 (386 aa).

A signal peptide spans 1–23 (MATTKSFLILFFMILATTSSTCA). The region spanning 32-229 (LSIDGGGIKG…TVGDPALLSL (198 aa)) is the PNPLA domain. The GXGXXG signature appears at 36-41 (GGGIKG). Residues 75–79 (GTSTG) carry the GXSXG motif. S77 acts as the Nucleophile in catalysis. An N-linked (GlcNAc...) asparagine glycan is attached at N115. The Proton acceptor role is filled by D215. Positions 215–217 (DGG) match the DGA/G motif. Residues 321-384 (ENALTGTTTE…NRKKLRANKA (64 aa)) are a coiled coil.

It belongs to the patatin family. As to expression, tuber.

Its subcellular location is the vacuole. Its function is as follows. Probable lipolytic acyl hydrolase (LAH), an activity which is thought to be involved in the response of tubers to pathogens. In Solanum tuberosum (Potato), this protein is Patatin-10.